Reading from the N-terminus, the 145-residue chain is LIRP (145 aa).

The or 22 signal peptide spans methionine 1 to alanine 19. 2 consecutive propeptides follow at residues threonine 20–arginine 33 and phenylalanine 117–arginine 122. 3 disulfide bridges follow: cysteine 44/cysteine 129, cysteine 56/cysteine 142, and cysteine 128/cysteine 133.

The protein belongs to the insulin family. As to quaternary structure, heterodimer of a B chain and an A chain linked by two disulfide bonds.

The protein localises to the secreted. The protein is LIRP of Locusta migratoria (Migratory locust).